We begin with the raw amino-acid sequence, 116 residues long: Transcription elongation factor SPT4 homolog 1 (116 aa).

The segment at 19–39 adopts a C4-type zinc-finger fold; the sequence is CLRCRLVKTYDQFRDSGCENC.

Belongs to the SPT4 family.

The protein localises to the nucleus. May regulate transcription elongation by RNA polymerase II. May enhance transcriptional pausing at sites proximal to the promoter, which may in turn facilitate the assembly of an elongation competent RNA polymerase II complex. This Arabidopsis thaliana (Mouse-ear cress) protein is Transcription elongation factor SPT4 homolog 1.